The sequence spans 1129 residues: Protein DWARF 53-LIKE (1129 aa).

Residues 8-180 (ARQCLSPAAV…KLAILRPAPP (173 aa)) form the Clp R domain. 2 repeat regions span residues 12-85 (LSPA…LDRL) and 102-180 (VSNS…PAPP). A disordered region spans residues 519–573 (RYIGVPADKERSANPSKGSESIGVQKDVIKPCAVSAVHSSSTARPISSPSVTNKR). The span at 557–568 (SSSTARPISSPS) shows a compositional bias: low complexity. The short motif at 577 to 581 (LVLNL) is the EAR 1 element. Residues 587–654 (KSDENLQERG…KRVEDSERSV (68 aa)) are disordered. Residues 596–608 (GMQSQHGTLSNAD) are compositionally biased toward polar residues. A compositionally biased stretch (basic and acidic residues) spans 645 to 654 (KRVEDSERSV). Short sequence motifs (EAR) lie at residues 798–802 (LDLNL) and 975–980 (FDLNLP). The segment at 975–1001 (FDLNLPVDEDEPFDADDDSSSHENSYG) is disordered. Acidic residues predominate over residues 981–992 (VDEDEPFDADDD).

It belongs to the ClpA/ClpB family. Polyubiquitinated. Strigolactone, but not karrikin, triggers rapid SCF(D3)-dependent degradation via the proteasome.

Its function is as follows. Repressor of strigolactones (SL) signaling. Subjected to a negative feedback control of SL signaling. In Oryza sativa subsp. japonica (Rice), this protein is Protein DWARF 53-LIKE.